Here is a 3961-residue protein sequence, read N- to C-terminus: Hybrid PKS-NRPS synthetase phm1 (3961 aa).

The Ketosynthase family 3 (KS3) domain occupies 4-436; it reads SEPIAIIGSA…GTNAHAIVEA (433 aa). Catalysis depends on for beta-ketoacyl synthase activity residues C178, H317, and H356. The tract at residues 541–867 is malonyl-CoA:ACP transacylase (MAT) domain; it reads VFTGQGAQWP…RSKNDILELS (327 aa). The interval 933–1068 is N-terminal hotdog fold; the sequence is HPILGKRCLE…GTVTVTLAEP (136 aa). The tract at residues 933 to 1234 is dehydratase (DH) domain; that stretch reads HPILGKRCLE…LELVPFTAAR (302 aa). One can recognise a PKS/mFAS DH domain in the interval 933 to 1236; sequence HPILGKRCLE…LVPFTAARPE (304 aa). H966 acts as the Proton acceptor; for dehydratase activity in catalysis. The interval 1083-1236 is C-terminal hotdog fold; that stretch reads MTEIEVDRFY…LVPFTAARPE (154 aa). The active-site Proton donor; for dehydratase activity is D1143. The segment at 1376 to 1569 is methyltransferase (MT) domain; sequence FDFYDQGLGL…GFGGIDTSTP (194 aa). Positions 2106–2277 are ketoreductase (KR) domain; sequence TYLLIGMSGQ…GVPGSAISIS (172 aa). Residues 2386–2464 enclose the Carrier 1 domain; sequence QAATIIKDGF…ELLQEAMDRT (79 aa). Position 2424 is an O-(pantetheine 4'-phosphoryl)serine (S2424). The segment at 2482–2527 is disordered; the sequence is PVTNTATPPPEVQVTGSASDSSRSLTPDGLSTSRPSTPVRTPMTEI. The span at 2495 to 2520 shows a compositional bias: polar residues; sequence VTGSASDSSRSLTPDGLSTSRPSTPV. Residues 2553-2993 form a condensation (C) domain region; it reads PMSYGQARFW…DLPRWAGADV (441 aa). An adenylation (A) (KR) domain region spans residues 3019 to 3424; it reads QMIGTYASKP…DGALFVHGRI (406 aa). The Carrier 2 domain maps to 3542 to 3616; the sequence is ANMEGRVAAL…GMARHVRAAF (75 aa). The residue at position 3576 (S3576) is an O-(pantetheine 4'-phosphoryl)serine. The interval 3725-3871 is reductase (RED) domain; the sequence is ITDIVFHCAA…VRPVSDVATT (147 aa).

It in the C-terminal section; belongs to the NRP synthetase family.

The protein operates within secondary metabolite biosynthesis. In terms of biological role, hybrid PKS-NRPS synthetase; part of the gene cluster that mediates the biosynthesis of the trans-fused decalin-containing tetramic acid phomasetin, the stereochemical opposite of the HIV-1 integrase inhibitor equisetin. The PKS module of phm1 together with the enoylreductase phm4 catalyze the formation of the polyketide unit which is then conjugated to L-serine by the condensation domain of the phm1 NRPS module. Activity of the Dieckmann cyclase domain (RED) of phm1 results in release of the Dieckmann product intermediate. The Diels-Alderase phm7 then uses the Dieckmann product of phm1 as substrate and catalyzes the Diels-Alder cycloaddition to form the decalin ring of N-desmethylphomasetin. N-desmethylphomasetin is further methylated to phomasetin by the methyltransferase phm5. The protein is Hybrid PKS-NRPS synthetase phm1 of Pyrenochaetopsis sp.